The sequence spans 412 residues: Gamma-glutamyl phosphate reductase (412 aa).

This sequence belongs to the gamma-glutamyl phosphate reductase family.

Its subcellular location is the cytoplasm. The catalysed reaction is L-glutamate 5-semialdehyde + phosphate + NADP(+) = L-glutamyl 5-phosphate + NADPH + H(+). Its pathway is amino-acid biosynthesis; L-proline biosynthesis; L-glutamate 5-semialdehyde from L-glutamate: step 2/2. In terms of biological role, catalyzes the NADPH-dependent reduction of L-glutamate 5-phosphate into L-glutamate 5-semialdehyde and phosphate. The product spontaneously undergoes cyclization to form 1-pyrroline-5-carboxylate. The polypeptide is Gamma-glutamyl phosphate reductase (Streptococcus suis (strain 98HAH33)).